Consider the following 230-residue polypeptide: Heptaprenylglyceryl phosphate synthase (230 aa).

A sn-glycerol 1-phosphate-binding site is contributed by Lys-12. The Mg(2+) site is built by Asp-14 and Thr-40. Sn-glycerol 1-phosphate-binding positions include 159-164 (YVEYSG), Gly-189, and 209-210 (GD).

Belongs to the GGGP/HepGP synthase family. Group I subfamily. As to quaternary structure, homodimer. Mg(2+) serves as cofactor.

It carries out the reaction sn-glycerol 1-phosphate + all-trans-heptaprenyl diphosphate = 3-heptaprenyl-sn-glycero-1-phosphate + diphosphate. It participates in membrane lipid metabolism; glycerophospholipid metabolism. Prenyltransferase that catalyzes in vivo the transfer of the heptaprenyl moiety of heptaprenyl pyrophosphate (HepPP; 35 carbon atoms) to the C3 hydroxyl of sn-glycerol-1-phosphate (G1P), producing heptaprenylglyceryl phosphate (HepGP). This reaction is an ether-bond-formation step in the biosynthesis of archaea-type G1P-based membrane lipids found in Bacillales. In Staphylococcus epidermidis (strain ATCC 35984 / DSM 28319 / BCRC 17069 / CCUG 31568 / BM 3577 / RP62A), this protein is Heptaprenylglyceryl phosphate synthase.